Here is a 298-residue protein sequence, read N- to C-terminus: GTPase Era (298 aa).

The Era-type G domain maps to 8–176; the sequence is RCGRIAVIGR…VSDLLALLPE (169 aa). The G1 stretch occupies residues 16–23; it reads GRPNVGKS. 16-23 serves as a coordination point for GTP; the sequence is GRPNVGKS. The interval 42-46 is G2; it reads QTTRH. The interval 63-66 is G3; sequence DTPG. GTP contacts are provided by residues 63 to 67 and 125 to 128; these read DTPGL and NKID. A G4 region spans residues 125-128; sequence NKID. The interval 155 to 157 is G5; sequence VSA. The KH type-2 domain maps to 199–283; that stretch reads VREQVMRQLG…FLETWVRVRK (85 aa).

Belongs to the TRAFAC class TrmE-Era-EngA-EngB-Septin-like GTPase superfamily. Era GTPase family. Monomer.

Its subcellular location is the cytoplasm. It localises to the cell inner membrane. In terms of biological role, an essential GTPase that binds both GDP and GTP, with rapid nucleotide exchange. Plays a role in 16S rRNA processing and 30S ribosomal subunit biogenesis and possibly also in cell cycle regulation and energy metabolism. This Xylella fastidiosa (strain Temecula1 / ATCC 700964) protein is GTPase Era.